Here is a 569-residue protein sequence, read N- to C-terminus: Formate--tetrahydrofolate ligase (569 aa).

An ATP-binding site is contributed by 68-75; it reads TPAGEGKT.

It belongs to the formate--tetrahydrofolate ligase family.

It carries out the reaction (6S)-5,6,7,8-tetrahydrofolate + formate + ATP = (6R)-10-formyltetrahydrofolate + ADP + phosphate. Its pathway is one-carbon metabolism; tetrahydrofolate interconversion. The polypeptide is Formate--tetrahydrofolate ligase (Psychrobacter sp. (strain PRwf-1)).